Reading from the N-terminus, the 179-residue chain is Large ribosomal subunit protein uL5 (179 aa).

It belongs to the universal ribosomal protein uL5 family. As to quaternary structure, part of the 50S ribosomal subunit; part of the 5S rRNA/L5/L18/L25 subcomplex. Contacts the 5S rRNA and the P site tRNA. Forms a bridge to the 30S subunit in the 70S ribosome.

In terms of biological role, this is one of the proteins that bind and probably mediate the attachment of the 5S RNA into the large ribosomal subunit, where it forms part of the central protuberance. In the 70S ribosome it contacts protein S13 of the 30S subunit (bridge B1b), connecting the 2 subunits; this bridge is implicated in subunit movement. Contacts the P site tRNA; the 5S rRNA and some of its associated proteins might help stabilize positioning of ribosome-bound tRNAs. The sequence is that of Large ribosomal subunit protein uL5 from Pseudomonas syringae pv. tomato (strain ATCC BAA-871 / DC3000).